A 228-amino-acid chain; its full sequence is NAD(P)H-hydrate epimerase (228 aa).

The YjeF N-terminal domain maps to 9-215 (AISIDEELFN…RLEEKYSLEL (207 aa)). A (6S)-NADPHX-binding site is contributed by 58 to 62 (NNGGD). N59 and D123 together coordinate K(+). (6S)-NADPHX is bound by residues 127–133 (GFSFKPP) and D156. S159 contacts K(+).

The protein belongs to the NnrE/AIBP family. K(+) serves as cofactor.

The catalysed reaction is (6R)-NADHX = (6S)-NADHX. The enzyme catalyses (6R)-NADPHX = (6S)-NADPHX. Catalyzes the epimerization of the S- and R-forms of NAD(P)HX, a damaged form of NAD(P)H that is a result of enzymatic or heat-dependent hydration. This is a prerequisite for the S-specific NAD(P)H-hydrate dehydratase to allow the repair of both epimers of NAD(P)HX. This chain is NAD(P)H-hydrate epimerase, found in Anopheles darlingi (Mosquito).